Here is a 538-residue protein sequence, read N- to C-terminus: Nectin-2 (538 aa).

The N-terminal stretch at 1–31 (MARAAALLPSRSPPTPLLWPLLLLLLLETGA) is a signal peptide. The region spanning 32–156 (QDVRVQVLPE…KGSVRGMTWL (125 aa)) is the Ig-like V-type domain. Residues 32–360 (QDVRVQVLPE…NTAGAGATGG (329 aa)) are Extracellular-facing. Cystine bridges form between cysteine 54–cysteine 140, cysteine 183–cysteine 238, and cysteine 283–cysteine 329. The N-linked (GlcNAc...) asparagine glycan is linked to asparagine 137. 2 Ig-like C2-type domains span residues 162-256 (PKNQ…VTLS) and 261-345 (PEVS…QVIF). An N-linked (GlcNAc...) asparagine glycan is attached at asparagine 324. A helical membrane pass occupies residues 361 to 381 (IIGGIIAAIIATAVAATGILI). The Cytoplasmic portion of the chain corresponds to 382 to 538 (CRQQRKEQTL…GFVMSRAMYV (157 aa)). A disordered region spans residues 390–414 (TLQGAEEDEDLEGPPSYKPPTPKAK). At threonine 410 the chain carries Phosphothreonine. Residues serine 433, glycine 465, and glycine 470 each carry the phosphoserine modification. Positions 462–489 (ERSGPLHPGATSLGSPIPVPPGPPAVED) are disordered.

It belongs to the nectin family. In terms of assembly, can form trans-heterodimers with NECTIN3. Interacts with CD226 or with PVRIG; these interactions are competitive and have a differential functional outcome on T-cell activation, either positive or negative, respectively. Binds with low affinity to TIGIT. (Microbial infection) Interacts with herpes simplex virus 1 (HHV-1) mutant Rid1, herpes simplex virus 1 (HHV-2) and pseudorabies virus (PRV) envelope glycoprotein D. As to expression, ubiquitous.

The protein localises to the cell membrane. Modulator of T-cell signaling. Can be either a costimulator of T-cell function, or a coinhibitor, depending on the receptor it binds to. Upon binding to CD226, stimulates T-cell proliferation and cytokine production, including that of IL2, IL5, IL10, IL13, and IFNG. Upon interaction with PVRIG, inhibits T-cell proliferation. These interactions are competitive. Probable cell adhesion protein. Its function is as follows. (Microbial infection) Acts as a receptor for herpes simplex virus 1 (HHV-1) mutant Rid1, herpes simplex virus 1 (HHV-2) and pseudorabies virus (PRV). The sequence is that of Nectin-2 from Homo sapiens (Human).